We begin with the raw amino-acid sequence, 93 residues long: Integration host factor subunit beta (93 aa).

Belongs to the bacterial histone-like protein family. As to quaternary structure, heterodimer of an alpha and a beta chain.

This protein is one of the two subunits of integration host factor, a specific DNA-binding protein that functions in genetic recombination as well as in transcriptional and translational control. This is Integration host factor subunit beta from Vibrio vulnificus (strain YJ016).